The following is a 121-amino-acid chain: Small ribosomal subunit protein uS13 (121 aa).

The disordered stretch occupies residues 95–121; it reads LPMRGQRTRTNARTRKGPRKAAASLKK.

Belongs to the universal ribosomal protein uS13 family. Part of the 30S ribosomal subunit. Forms a loose heterodimer with protein S19. Forms two bridges to the 50S subunit in the 70S ribosome.

In terms of biological role, located at the top of the head of the 30S subunit, it contacts several helices of the 16S rRNA. In the 70S ribosome it contacts the 23S rRNA (bridge B1a) and protein L5 of the 50S subunit (bridge B1b), connecting the 2 subunits; these bridges are implicated in subunit movement. Contacts the tRNAs in the A and P-sites. This is Small ribosomal subunit protein uS13 from Polaromonas naphthalenivorans (strain CJ2).